We begin with the raw amino-acid sequence, 116 residues long: T cell receptor alpha variable 38-1 (116 aa).

Residues 1–21 (MTRVSLLWAVVVSTCLESGMA) form the signal peptide. The Ig-like domain occupies 22–116 (QTVTQSQPEM…TAMYFCAFMK (95 aa)). Cysteines 43 and 112 form a disulfide. Asparagine 78 carries N-linked (GlcNAc...) asparagine glycosylation.

As to quaternary structure, alpha-beta TR is a heterodimer composed of an alpha and beta chain; disulfide-linked. The alpha-beta TR is associated with the transmembrane signaling CD3 coreceptor proteins to form the TR-CD3 (TcR or TCR). The assembly of alpha-beta TR heterodimers with CD3 occurs in the endoplasmic reticulum where a single alpha-beta TR heterodimer associates with one CD3D-CD3E heterodimer, one CD3G-CD3E heterodimer and one CD247 homodimer forming a stable octameric structure. CD3D-CD3E and CD3G-CD3E heterodimers preferentially associate with TR alpha and TR beta chains, respectively. The association of the CD247 homodimer is the last step of TcR assembly in the endoplasmic reticulum and is required for transport to the cell surface.

It is found in the cell membrane. In terms of biological role, v region of the variable domain of T cell receptor (TR) alpha chain that participates in the antigen recognition. Alpha-beta T cell receptors are antigen specific receptors which are essential to the immune response and are present on the cell surface of T lymphocytes. Recognize peptide-major histocompatibility (MH) (pMH) complexes that are displayed by antigen presenting cells (APC), a prerequisite for efficient T cell adaptive immunity against pathogens. Binding of alpha-beta TR to pMH complex initiates TR-CD3 clustering on the cell surface and intracellular activation of LCK that phosphorylates the ITAM motifs of CD3G, CD3D, CD3E and CD247 enabling the recruitment of ZAP70. In turn ZAP70 phosphorylates LAT, which recruits numerous signaling molecules to form the LAT signalosome. The LAT signalosome propagates signal branching to three major signaling pathways, the calcium, the mitogen-activated protein kinase (MAPK) kinase and the nuclear factor NF-kappa-B (NF-kB) pathways, leading to the mobilization of transcription factors that are critical for gene expression and essential for T cell growth and differentiation. The T cell repertoire is generated in the thymus, by V-(D)-J rearrangement. This repertoire is then shaped by intrathymic selection events to generate a peripheral T cell pool of self-MH restricted, non-autoaggressive T cells. Post-thymic interaction of alpha-beta TR with the pMH complexes shapes TR structural and functional avidity. The polypeptide is T cell receptor alpha variable 38-1 (Homo sapiens (Human)).